We begin with the raw amino-acid sequence, 289 residues long: Phosphatidylglycerol--prolipoprotein diacylglyceryl transferase (289 aa).

The next 3 helical transmembrane spans lie at 24–44 (GIAIRWYGTMYIVAFAIVYLL), 70–90 (GGVLIGGRIGYILFYGFDWFL), and 111–131 (GINGMSFHGGLIGVAIALWLF). A 1,2-diacyl-sn-glycero-3-phospho-(1'-sn-glycerol) is bound at residue Arg-158. Transmembrane regions (helical) follow at residues 219-239 (GYLSGLYLIGYGTVRFFIEFF) and 253-273 (FSMGQVLCFLMIAAGIGILVW).

Belongs to the Lgt family.

It is found in the cell inner membrane. It catalyses the reaction L-cysteinyl-[prolipoprotein] + a 1,2-diacyl-sn-glycero-3-phospho-(1'-sn-glycerol) = an S-1,2-diacyl-sn-glyceryl-L-cysteinyl-[prolipoprotein] + sn-glycerol 1-phosphate + H(+). Its pathway is protein modification; lipoprotein biosynthesis (diacylglyceryl transfer). Its function is as follows. Catalyzes the transfer of the diacylglyceryl group from phosphatidylglycerol to the sulfhydryl group of the N-terminal cysteine of a prolipoprotein, the first step in the formation of mature lipoproteins. The sequence is that of Phosphatidylglycerol--prolipoprotein diacylglyceryl transferase from Chlorobaculum tepidum (strain ATCC 49652 / DSM 12025 / NBRC 103806 / TLS) (Chlorobium tepidum).